The following is a 377-amino-acid chain: Alanine racemase (377 aa).

The active-site Proton acceptor; specific for D-alanine is Lys-37. An N6-(pyridoxal phosphate)lysine modification is found at Lys-37. Arg-135 serves as a coordination point for substrate. The active-site Proton acceptor; specific for L-alanine is Tyr-271. Met-319 contacts substrate.

It belongs to the alanine racemase family. Pyridoxal 5'-phosphate is required as a cofactor.

The catalysed reaction is L-alanine = D-alanine. It functions in the pathway amino-acid biosynthesis; D-alanine biosynthesis; D-alanine from L-alanine: step 1/1. Catalyzes the interconversion of L-alanine and D-alanine. May also act on other amino acids. The sequence is that of Alanine racemase (alr) from Helicobacter pylori (strain J99 / ATCC 700824) (Campylobacter pylori J99).